The sequence spans 918 residues: Pre-pro-metalloprotease PrtV (918 aa).

Positions 1–23 (MKTIKKTLLAAAIASFFSSGLYA) are cleaved as a signal peptide. A propeptide spanning residues 24-105 (QTPIDLGVVN…QKGPHKARVF (82 aa)) is cleaved from the precursor. Position 330 (His330) interacts with Zn(2+). Residue Glu331 is part of the active site. His334 serves as a coordination point for Zn(2+). Ca(2+)-binding residues include Ile757, Asp782, Asp821, and Asp825. PKD domains are found at residues 758–835 (APVA…TIKV) and 855–918 (VTMW…KVKL). A propeptide spanning residues 835 to 918 (VDTPNALPQA…VTTITIKVKL (84 aa)) is cleaved from the precursor.

This sequence belongs to the peptidase M6 family. It depends on Zn(2+) as a cofactor. In terms of processing, prtV is expressed as an inactive, multidomain, 102 kDa pre-pro-metalloprotease. To form a catalytically active protease, PrtV is first secreted, and then it undergoes N- and C-terminal cleavages during envelope translocation to yield a 81 kDa pro-metalloprotease. Outside the cell, the 81 kDa pro-metalloprotease undergoes an auto-cleavage. The two major products of autoproteolysis (37 kDa and 18 kDa) together form the so called 55 kDa active complex.

It is found in the secreted. With respect to regulation, calcium plays an important structural role, providing stability to this protein in the cytoplasm. Outside the cell, the decrease of the calcium concentration triggers the autoproteolysis. PrtV activity is increased by 25 mM of Sr(2+) or Mg(2+) and to some extent by Ba(2+); however, Ba(2+) inhibits PrtV at higher concentrations. Completely inhibited by EDTA and 1,10-phenanthroline. Metalloprotease that exhibits a cytotoxic effect leading to cell death. In host tissues, it could play a role in pathogenesis by modulating the stability of the extracellular matrix components such as fibronectin and fibrinogen. Also able to cleave plasminogen. The protein is Pre-pro-metalloprotease PrtV of Vibrio cholerae serotype O1 (strain ATCC 39315 / El Tor Inaba N16961).